The chain runs to 688 residues: MNFENLLIELGTEELPPKALRKLAESFLANFTEELTKADLAFKSAAWYAAPRRLAINVTELAIAQADKIVEKRGPAVSSAFDAEGKPTKAAEGWARGNGITVDQAERLVTDKGEWLVYNAKVEGVETKSLIAAMAQRALDKLPIPKPMRWGSSKTQFIRPVHTATMLLGSELIEGELLGIKSARNVRGHRFMGTGFELDHADNYLTLLKEKGKVIADYESRKALIKADAEKAAAKIGGTADIEDDLLEEVTSLVEWPVVLTASFEEKFLNVPSEALVYTMKGDQKYFPVFDEAGKLLPNFIFVANIESKDPAQIIAGNEKVVRPRLADAEFFFNTDKKHTLESRLPSLETVLFQQQLGTLKDKVTRISALAAFIAEQTGANAVDAARAGLLSKTDLMTNMVMEFTDTQGTMGMHYARLDGETEAVALAMEEQYKPKFSGDTVPTAAVSCAVALADKLDTLVGIFGIGQAPKGAADPFALRRAAIGVLRIIVENKLPLDLVTLIAKAQELHGTNLSNANASDEVLEFLMARFRAWYQDKGIDVDVILAVLARRPTRPADFDSRINAVSHFRSLEASSALAAANKRVSNILAKVEGELPTAINSALLAEAAEQALAAKLAELQPQLAPLFANADYQQALTLLSSLRESVDQFFEDVMVMADDEALKNNRLALLNNLREQFLHVADISLLQ.

This sequence belongs to the class-II aminoacyl-tRNA synthetase family. In terms of assembly, tetramer of two alpha and two beta subunits.

Its subcellular location is the cytoplasm. The enzyme catalyses tRNA(Gly) + glycine + ATP = glycyl-tRNA(Gly) + AMP + diphosphate. The polypeptide is Glycine--tRNA ligase beta subunit (Shewanella sp. (strain MR-7)).